We begin with the raw amino-acid sequence, 951 residues long: Spliceosome associated factor 3, U4/U6 recycling protein (951 aa).

Positions 1 to 58 are disordered; that stretch reads MAATGNEEQTLLPDIEEEAEGMEREMESEDDEEEGMGVEHSEEEDEEDTSEDERENEA. Acidic residues predominate over residues 14-56; sequence DIEEEAEGMEREMESEDDEEEGMGVEHSEEEDEEDTSEDEREN. HAT repeat units lie at residues 88–120, 126–157, 163–199, 222–255, 304–336, 339–371, 374–410, and 467–500; these read GKLHRLRKARQKMSELFPLTEEIWLDWLKDEIR, SDREKVYELFERAIKDYVCPEIWLEYVQYSIG, GGIERVRSIFERALTAVGLHMTKGASIWEAYREFEIV, AQLERIHTLFRRQLAVPLMDMEGTYAEYSDWADD, GDPARVQIIFERALAENCLVPDLWIKYTTYLDR, KIKDLVLSAHERAVRNCPWTMGLWKSYLLALER, ADHQTVKDVFEKALNAGFIQATDYVEIWQSYLDYLRR, and KNMQKARELWDSIMTKGNAKYANMWLEYYNLERS. The interval 517 to 941 is necessary and sufficient for U6 snRNA binding; the sequence is CTSDYPEHVC…LDTQTKSLSN (425 aa). A coiled-coil region spans residues 533-593; that stretch reads ERVEGSLEDW…VKADKKAQKK (61 aa). Positions 567-581 are enriched in basic and acidic residues; the sequence is EALHARQEEEKAEQR. Residues 567 to 686 are disordered; it reads EALHARQEEE…HDMPKEQRKD (120 aa). Positions 582–596 are enriched in basic residues; the sequence is RKVKADKKAQKKGQK. Acidic residues predominate over residues 608-619; sequence DDDEEEWGEEAE. Residues 674-686 show a composition bias toward basic and acidic residues; sequence RQPHDMPKEQRKD. RRM domains are found at residues 688-766 and 785-862; these read NCVF…PCVD and HKIF…ISNP. Residues 905–938 form a disordered region; it reads RQSTPDAKAENGTISAPHATVTDGETSLDTQTKS. Polar residues predominate over residues 927 to 938; that stretch reads DGETSLDTQTKS.

It is found in the nucleus. The protein resides in the nucleoplasm. Its subcellular location is the cajal body. It localises to the nucleus speckle. The protein localises to the cytoplasm. Functionally, U6 snRNP-binding protein that functions as a recycling factor of the splicing machinery. Promotes the initial reassembly of U4 and U6 snRNPs following their ejection from the spliceosome during its maturation. May also function as a substrate targeting factor for deubiquitinases and mediate the deubiquitination of components of the spliceosome and histones. The sequence is that of Spliceosome associated factor 3, U4/U6 recycling protein from Danio rerio (Zebrafish).